Reading from the N-terminus, the 144-residue chain is 3-dehydroquinate dehydratase (144 aa).

Tyrosine 23 functions as the Proton acceptor in the catalytic mechanism. Residues asparagine 74, histidine 80, and aspartate 87 each coordinate substrate. Histidine 100 functions as the Proton donor in the catalytic mechanism. Substrate is bound by residues 101–102 (LS) and arginine 111.

The protein belongs to the type-II 3-dehydroquinase family. As to quaternary structure, homododecamer.

It catalyses the reaction 3-dehydroquinate = 3-dehydroshikimate + H2O. It functions in the pathway metabolic intermediate biosynthesis; chorismate biosynthesis; chorismate from D-erythrose 4-phosphate and phosphoenolpyruvate: step 3/7. Functionally, catalyzes a trans-dehydration via an enolate intermediate. The chain is 3-dehydroquinate dehydratase from Hydrogenovibrio crunogenus (strain DSM 25203 / XCL-2) (Thiomicrospira crunogena).